A 401-amino-acid chain; its full sequence is Tryptophan synthase beta chain (401 aa).

N6-(pyridoxal phosphate)lysine is present on K92.

Belongs to the TrpB family. As to quaternary structure, tetramer of two alpha and two beta chains. It depends on pyridoxal 5'-phosphate as a cofactor.

It carries out the reaction (1S,2R)-1-C-(indol-3-yl)glycerol 3-phosphate + L-serine = D-glyceraldehyde 3-phosphate + L-tryptophan + H2O. It functions in the pathway amino-acid biosynthesis; L-tryptophan biosynthesis; L-tryptophan from chorismate: step 5/5. In terms of biological role, the beta subunit is responsible for the synthesis of L-tryptophan from indole and L-serine. The polypeptide is Tryptophan synthase beta chain (Ruthia magnifica subsp. Calyptogena magnifica).